Here is a 277-residue protein sequence, read N- to C-terminus: Shikimate dehydrogenase (NADP(+)) (277 aa).

Residues 15 to 17 and T62 each bind shikimate; that span reads SLS. Catalysis depends on K66, which acts as the Proton acceptor. Residues N87 and D102 each coordinate shikimate. Residues 127 to 131, 151 to 156, and I219 each bind NADP(+); these read GAGGA and NRTVDK. Y221 is a binding site for shikimate. G242 contacts NADP(+).

The protein belongs to the shikimate dehydrogenase family. In terms of assembly, homodimer.

The enzyme catalyses shikimate + NADP(+) = 3-dehydroshikimate + NADPH + H(+). It functions in the pathway metabolic intermediate biosynthesis; chorismate biosynthesis; chorismate from D-erythrose 4-phosphate and phosphoenolpyruvate: step 4/7. Involved in the biosynthesis of the chorismate, which leads to the biosynthesis of aromatic amino acids. Catalyzes the reversible NADPH linked reduction of 3-dehydroshikimate (DHSA) to yield shikimate (SA). This Bacillus cereus (strain 03BB102) protein is Shikimate dehydrogenase (NADP(+)).